Reading from the N-terminus, the 346-residue chain is Phosphoribosylformylglycinamidine cyclo-ligase (346 aa).

This sequence belongs to the AIR synthase family.

The protein localises to the cytoplasm. The enzyme catalyses 2-formamido-N(1)-(5-O-phospho-beta-D-ribosyl)acetamidine + ATP = 5-amino-1-(5-phospho-beta-D-ribosyl)imidazole + ADP + phosphate + H(+). Its pathway is purine metabolism; IMP biosynthesis via de novo pathway; 5-amino-1-(5-phospho-D-ribosyl)imidazole from N(2)-formyl-N(1)-(5-phospho-D-ribosyl)glycinamide: step 2/2. The sequence is that of Phosphoribosylformylglycinamidine cyclo-ligase from Shewanella pealeana (strain ATCC 700345 / ANG-SQ1).